A 101-amino-acid polypeptide reads, in one-letter code: Small ribosomal subunit protein uS10 (101 aa).

It belongs to the universal ribosomal protein uS10 family. In terms of assembly, part of the 30S ribosomal subunit.

Its function is as follows. Involved in the binding of tRNA to the ribosomes. The protein is Small ribosomal subunit protein uS10 of Porphyromonas gingivalis (strain ATCC 33277 / DSM 20709 / CIP 103683 / JCM 12257 / NCTC 11834 / 2561).